A 969-amino-acid polypeptide reads, in one-letter code: Alanine--tRNA ligase (969 aa).

The transit peptide at 1 to 8 directs the protein to the mitochondrion; sequence MIKTLLRR. Zn(2+)-binding residues include His616, His620, Cys735, and His739.

Belongs to the class-II aminoacyl-tRNA synthetase family. As to quaternary structure, monomer. It depends on Zn(2+) as a cofactor.

It is found in the mitochondrion. The protein localises to the cytoplasm. The catalysed reaction is tRNA(Ala) + L-alanine + ATP = L-alanyl-tRNA(Ala) + AMP + diphosphate. Its function is as follows. Catalyzes the attachment of alanine to tRNA(Ala) in a two-step reaction: alanine is first activated by ATP to form Ala-AMP and then transferred to the acceptor end of tRNA(Ala). Also edits incorrectly charged tRNA(Ala) via its editing domain. The sequence is that of Alanine--tRNA ligase from Candida albicans (strain SC5314 / ATCC MYA-2876) (Yeast).